Consider the following 331-residue polypeptide: Ribose-phosphate pyrophosphokinase (331 aa).

An ATP-binding site is contributed by 55–57 (DGE). 2 residues coordinate Mg(2+): histidine 148 and aspartate 187. Lysine 211 is a catalytic residue. Residues arginine 213, aspartate 237, and 241-245 (DTAGT) contribute to the D-ribose 5-phosphate site.

The protein belongs to the ribose-phosphate pyrophosphokinase family. Class I subfamily. As to quaternary structure, homohexamer. Requires Mg(2+) as cofactor.

The protein resides in the cytoplasm. It carries out the reaction D-ribose 5-phosphate + ATP = 5-phospho-alpha-D-ribose 1-diphosphate + AMP + H(+). The protein operates within metabolic intermediate biosynthesis; 5-phospho-alpha-D-ribose 1-diphosphate biosynthesis; 5-phospho-alpha-D-ribose 1-diphosphate from D-ribose 5-phosphate (route I): step 1/1. Involved in the biosynthesis of the central metabolite phospho-alpha-D-ribosyl-1-pyrophosphate (PRPP) via the transfer of pyrophosphoryl group from ATP to 1-hydroxyl of ribose-5-phosphate (Rib-5-P). The protein is Ribose-phosphate pyrophosphokinase of Synechococcus elongatus (strain ATCC 33912 / PCC 7942 / FACHB-805) (Anacystis nidulans R2).